The sequence spans 189 residues: Pyridoxal 5'-phosphate synthase subunit PdxT (189 aa).

L-glutamine is bound at residue 46 to 48 (GES). C78 serves as the catalytic Nucleophile. Residues R107 and 136–137 (IR) contribute to the L-glutamine site. Residues H173 and E175 each act as charge relay system in the active site.

This sequence belongs to the glutaminase PdxT/SNO family. As to quaternary structure, in the presence of PdxS, forms a dodecamer of heterodimers. Only shows activity in the heterodimer.

The enzyme catalyses aldehydo-D-ribose 5-phosphate + D-glyceraldehyde 3-phosphate + L-glutamine = pyridoxal 5'-phosphate + L-glutamate + phosphate + 3 H2O + H(+). It carries out the reaction L-glutamine + H2O = L-glutamate + NH4(+). It participates in cofactor biosynthesis; pyridoxal 5'-phosphate biosynthesis. In terms of biological role, catalyzes the hydrolysis of glutamine to glutamate and ammonia as part of the biosynthesis of pyridoxal 5'-phosphate. The resulting ammonia molecule is channeled to the active site of PdxS. This Roseiflexus castenholzii (strain DSM 13941 / HLO8) protein is Pyridoxal 5'-phosphate synthase subunit PdxT.